A 320-amino-acid chain; its full sequence is Ribosomal RNA large subunit methyltransferase F (320 aa).

The interval 1–20 is disordered; sequence MHKSANSKTRKQSKGLHPRN.

The protein belongs to the methyltransferase superfamily. METTL16/RlmF family.

The protein resides in the cytoplasm. It carries out the reaction adenosine(1618) in 23S rRNA + S-adenosyl-L-methionine = N(6)-methyladenosine(1618) in 23S rRNA + S-adenosyl-L-homocysteine + H(+). Its function is as follows. Specifically methylates the adenine in position 1618 of 23S rRNA. This chain is Ribosomal RNA large subunit methyltransferase F, found in Saccharophagus degradans (strain 2-40 / ATCC 43961 / DSM 17024).